Here is a 190-residue protein sequence, read N- to C-terminus: MQKKFEDCVKTMLEIIGENPNREGLIKTPNRVFKTYEFLTSGYTQNVKEILNDALFESSNNEMVLVRDIEFYSLCEHHLLPFFGRAHVAYIPNKKVVGLSKIPRLVEVFARRLQIQEQLTEQIAQALMENVDAKGVGVVIEARHMCVEMRGVQKANSTTTTSALRGIFLKNEKTREEFFSLINSAKQVRF.

3 residues coordinate Zn(2+): Cys75, His78, and Cys146.

It belongs to the GTP cyclohydrolase I family. As to quaternary structure, toroid-shaped homodecamer, composed of two pentamers of five dimers.

The enzyme catalyses GTP + H2O = 7,8-dihydroneopterin 3'-triphosphate + formate + H(+). The protein operates within cofactor biosynthesis; 7,8-dihydroneopterin triphosphate biosynthesis; 7,8-dihydroneopterin triphosphate from GTP: step 1/1. The polypeptide is GTP cyclohydrolase 1 (Campylobacter jejuni subsp. jejuni serotype O:23/36 (strain 81-176)).